The following is a 631-amino-acid chain: Guanylate-binding protein 4 (631 aa).

Residues 33-283 enclose the GB1/RHD3-type G domain; sequence SQPVVVVAIV…FASYIFTYAK (251 aa). GTP contacts are provided by residues 43-50 and 103-107; these read GWSHTGKS and DTEGL. Residues 492 to 592 adopt a coiled-coil conformation; the sequence is IAEKHTKKEA…GHNIKEMKQN (101 aa).

Belongs to the TRAFAC class dynamin-like GTPase superfamily. GB1/RHD3 GTPase family. GB1 subfamily. As to quaternary structure, heterodimer with other family members, including GBP1, GBP2 and GBP5. Dimerization regulates subcellular location. Interacts with IRF7; preventing interaction between TRAF6 and IRF7, resulting in impaired TRAF6-mediated IRF7 ubiquitination. In terms of tissue distribution, mainly expressed in organs of the immune system, such as spleen and lymph nodes.

It localises to the golgi apparatus membrane. It is found in the cytoplasm. Its subcellular location is the nucleus. The protein localises to the perinuclear region. It catalyses the reaction GTP + H2O = GDP + phosphate + H(+). In terms of biological role, interferon (IFN)-inducible GTPase that plays important roles in innate immunity against a diverse range of bacterial, viral and protozoan pathogens. Negatively regulates the antiviral response by inhibiting activation of IRF7 transcription factor. This Mus musculus (Mouse) protein is Guanylate-binding protein 4.